The sequence spans 630 residues: tRNA uridine 5-carboxymethylaminomethyl modification enzyme MnmG (630 aa).

Position 13–18 (13–18) interacts with FAD; the sequence is GGGHAG. 273–287 is an NAD(+) binding site; it reads GPRYCPSIEDKIHRF.

The protein belongs to the MnmG family. Homodimer. Heterotetramer of two MnmE and two MnmG subunits. FAD serves as cofactor.

It is found in the cytoplasm. Its function is as follows. NAD-binding protein involved in the addition of a carboxymethylaminomethyl (cmnm) group at the wobble position (U34) of certain tRNAs, forming tRNA-cmnm(5)s(2)U34. This chain is tRNA uridine 5-carboxymethylaminomethyl modification enzyme MnmG, found in Pseudomonas putida (Arthrobacter siderocapsulatus).